We begin with the raw amino-acid sequence, 921 residues long: Isoleucine--tRNA ligase (921 aa).

A 'HIGH' region motif is present at residues 57–67 (PYANGDIHMGH). Position 552 (Glu552) interacts with L-isoleucyl-5'-AMP. The 'KMSKS' region signature appears at 593–597 (KMSKS). Residue Lys596 coordinates ATP. Zn(2+)-binding residues include Cys888, Cys891, Cys908, and Cys911.

The protein belongs to the class-I aminoacyl-tRNA synthetase family. IleS type 1 subfamily. As to quaternary structure, monomer. Requires Zn(2+) as cofactor.

The protein resides in the cytoplasm. The enzyme catalyses tRNA(Ile) + L-isoleucine + ATP = L-isoleucyl-tRNA(Ile) + AMP + diphosphate. In terms of biological role, catalyzes the attachment of isoleucine to tRNA(Ile). As IleRS can inadvertently accommodate and process structurally similar amino acids such as valine, to avoid such errors it has two additional distinct tRNA(Ile)-dependent editing activities. One activity is designated as 'pretransfer' editing and involves the hydrolysis of activated Val-AMP. The other activity is designated 'posttransfer' editing and involves deacylation of mischarged Val-tRNA(Ile). The sequence is that of Isoleucine--tRNA ligase from Bacillus cereus (strain B4264).